Consider the following 109-residue polypeptide: Large ribosomal subunit protein uL22 (109 aa).

It belongs to the universal ribosomal protein uL22 family. In terms of assembly, part of the 50S ribosomal subunit.

This protein binds specifically to 23S rRNA; its binding is stimulated by other ribosomal proteins, e.g. L4, L17, and L20. It is important during the early stages of 50S assembly. It makes multiple contacts with different domains of the 23S rRNA in the assembled 50S subunit and ribosome. In terms of biological role, the globular domain of the protein is located near the polypeptide exit tunnel on the outside of the subunit, while an extended beta-hairpin is found that lines the wall of the exit tunnel in the center of the 70S ribosome. The sequence is that of Large ribosomal subunit protein uL22 from Herminiimonas arsenicoxydans.